A 220-amino-acid chain; its full sequence is Serine protease-like protein 51 (220 aa).

The N-terminal stretch at 1–16 (MFQLLIPLLLALKGHA) is a signal peptide. The 198-residue stretch at 23–220 (VQCGHRPAFP…SSKWVSSVGA (198 aa)) folds into the Peptidase S1 domain. An N-linked (GlcNAc...) asparagine glycan is attached at N33. Residues C64 and C80 are joined by a disulfide bond. N92 carries an N-linked (GlcNAc...) asparagine glycan. A disulfide bridge connects residues C157 and C170.

It belongs to the peptidase S1 family.

Its subcellular location is the secreted. In Homo sapiens (Human), this protein is Serine protease-like protein 51.